A 120-amino-acid chain; its full sequence is Ribosome-binding factor A (120 aa).

This sequence belongs to the RbfA family. Monomer. Binds 30S ribosomal subunits, but not 50S ribosomal subunits or 70S ribosomes.

The protein resides in the cytoplasm. Its function is as follows. One of several proteins that assist in the late maturation steps of the functional core of the 30S ribosomal subunit. Associates with free 30S ribosomal subunits (but not with 30S subunits that are part of 70S ribosomes or polysomes). Required for efficient processing of 16S rRNA. May interact with the 5'-terminal helix region of 16S rRNA. The chain is Ribosome-binding factor A from Clostridium botulinum (strain Okra / Type B1).